Consider the following 159-residue polypeptide: Superoxide dismutase [Cu-Zn] (159 aa).

H47, H49, and H64 together coordinate Cu cation. An intrachain disulfide couples C58 to C150. Zn(2+) is bound by residues H64, H72, H81, and D84. Cu cation is bound at residue H121.

This sequence belongs to the Cu-Zn superoxide dismutase family. Requires Cu cation as cofactor. Zn(2+) serves as cofactor.

It is found in the cytoplasm. The catalysed reaction is 2 superoxide + 2 H(+) = H2O2 + O2. In terms of biological role, destroys radicals which are normally produced within the cells and which are toxic to biological systems. The chain is Superoxide dismutase [Cu-Zn] (SOD) from Haemonchus contortus (Barber pole worm).